The sequence spans 156 residues: Putative pre-16S rRNA nuclease (156 aa).

It belongs to the YqgF nuclease family.

It localises to the cytoplasm. Functionally, could be a nuclease involved in processing of the 5'-end of pre-16S rRNA. This chain is Putative pre-16S rRNA nuclease, found in Nocardioides sp. (strain ATCC BAA-499 / JS614).